Here is a 351-residue protein sequence, read N- to C-terminus: Protein RecA (351 aa).

ATP is bound at residue 68–75 (GPESSGKT).

This sequence belongs to the RecA family.

The protein localises to the cytoplasm. In terms of biological role, can catalyze the hydrolysis of ATP in the presence of single-stranded DNA, the ATP-dependent uptake of single-stranded DNA by duplex DNA, and the ATP-dependent hybridization of homologous single-stranded DNAs. It interacts with LexA causing its activation and leading to its autocatalytic cleavage. The protein is Protein RecA of Chloroflexus aurantiacus (strain ATCC 29364 / DSM 637 / Y-400-fl).